A 284-amino-acid chain; its full sequence is 4-diphosphocytidyl-2-C-methyl-D-erythritol kinase (284 aa).

The active site involves lysine 10. ATP is bound at residue 95-105 (PVAAGLGGGSS). Aspartate 137 is an active-site residue.

This sequence belongs to the GHMP kinase family. IspE subfamily.

It catalyses the reaction 4-CDP-2-C-methyl-D-erythritol + ATP = 4-CDP-2-C-methyl-D-erythritol 2-phosphate + ADP + H(+). It functions in the pathway isoprenoid biosynthesis; isopentenyl diphosphate biosynthesis via DXP pathway; isopentenyl diphosphate from 1-deoxy-D-xylulose 5-phosphate: step 3/6. Its function is as follows. Catalyzes the phosphorylation of the position 2 hydroxy group of 4-diphosphocytidyl-2C-methyl-D-erythritol. The chain is 4-diphosphocytidyl-2-C-methyl-D-erythritol kinase from Levilactobacillus brevis (strain ATCC 367 / BCRC 12310 / CIP 105137 / JCM 1170 / LMG 11437 / NCIMB 947 / NCTC 947) (Lactobacillus brevis).